A 416-amino-acid polypeptide reads, in one-letter code: Phosphoribosylamine--glycine ligase (416 aa).

Positions 105 to 310 constitute an ATP-grasp domain; it reads KSFLKKYRIK…PLELILAATQ (206 aa). 131-192 contributes to the ATP binding site; the sequence is IYSLTPPIVV…EEFLDGYELS (62 aa). Positions 281 and 283 each coordinate Mg(2+).

It belongs to the GARS family. Requires Mg(2+) as cofactor. Mn(2+) is required as a cofactor.

The catalysed reaction is 5-phospho-beta-D-ribosylamine + glycine + ATP = N(1)-(5-phospho-beta-D-ribosyl)glycinamide + ADP + phosphate + H(+). Its pathway is purine metabolism; IMP biosynthesis via de novo pathway; N(1)-(5-phospho-D-ribosyl)glycinamide from 5-phospho-alpha-D-ribose 1-diphosphate: step 2/2. This Campylobacter jejuni subsp. jejuni serotype O:2 (strain ATCC 700819 / NCTC 11168) protein is Phosphoribosylamine--glycine ligase.